A 750-amino-acid polypeptide reads, in one-letter code: GTP pyrophosphokinase rsh (750 aa).

The HD domain maps to 45 to 144 (YFSHPLEVAA…VKLADRLHNM (100 aa)). The TGS domain maps to 390–451 (DQVFCFTPKG…KNGDEVDIIR (62 aa)). Residues 587–613 (AAKVDPAATTPKPGKRALPIRGTNPDL) are disordered. The region spanning 676 to 750 (RISVSAINSP…SVSSAKRVNG (75 aa)) is the ACT domain.

The protein belongs to the RelA/SpoT family.

The catalysed reaction is GTP + ATP = guanosine 3'-diphosphate 5'-triphosphate + AMP. In terms of biological role, functions as a (p)ppGpp synthase. In eubacteria ppGpp (guanosine 3'-diphosphate 5'-diphosphate) is a mediator of the stringent response that coordinates a variety of cellular activities in response to changes in nutritional abundance. It is necessary for persistence in mice, essential for intracellular growth of Brucella and required for expression of the type IV secretion system VirB and therefore plays a role in adaptation of Brucella to its intracellular host environment. This Brucella suis biovar 1 (strain 1330) protein is GTP pyrophosphokinase rsh (rsh).